The chain runs to 165 residues: K(+)/H(+) antiporter subunit KhtT (165 aa).

Residues 76–161 (LESIEMAFSD…LKKLIHDFLS (86 aa)) form the RCK C-terminal domain.

In terms of assembly, the transporter is composed of the integral membrane protein KhtU and the regulatory protein KhtT.

The protein localises to the cell membrane. With respect to regulation, binds cyclic di-AMP (c-di-AMP), which may regulate the activity. Its function is as follows. Required for activity of the potassium/proton antiporter KhtU. Involved in protection of the cell from methylglyoxal, a toxic by-product of glycolysis. The chain is K(+)/H(+) antiporter subunit KhtT from Bacillus subtilis (strain 168).